The primary structure comprises 379 residues: Cytochrome b (379 aa).

The next 4 helical transmembrane spans lie at 33-53 (FGSL…FLAM), 77-98 (WILR…YIHV), 113-133 (WNIG…GYVL), and 178-198 (FFAF…VHLL). His-83 and His-97 together coordinate heme b. Heme b-binding residues include His-182 and His-196. His-201 serves as a coordination point for a ubiquinone. The next 4 membrane-spanning stretches (helical) occupy residues 226–246 (IKDI…VLFS), 288–308 (LGGV…PVLH), 320–340 (LSQC…WIGG), and 347–367 (YVIX…XXXX).

The protein belongs to the cytochrome b family. The cytochrome bc1 complex contains 11 subunits: 3 respiratory subunits (MT-CYB, CYC1 and UQCRFS1), 2 core proteins (UQCRC1 and UQCRC2) and 6 low-molecular weight proteins (UQCRH/QCR6, UQCRB/QCR7, UQCRQ/QCR8, UQCR10/QCR9, UQCR11/QCR10 and a cleavage product of UQCRFS1). This cytochrome bc1 complex then forms a dimer. The cofactor is heme b.

Its subcellular location is the mitochondrion inner membrane. Functionally, component of the ubiquinol-cytochrome c reductase complex (complex III or cytochrome b-c1 complex) that is part of the mitochondrial respiratory chain. The b-c1 complex mediates electron transfer from ubiquinol to cytochrome c. Contributes to the generation of a proton gradient across the mitochondrial membrane that is then used for ATP synthesis. This Myotis goudotii (Malagasy mouse-eared bat) protein is Cytochrome b (MT-CYB).